The following is a 118-amino-acid chain: Urease subunit beta (118 aa).

The protein belongs to the urease beta subunit family. In terms of assembly, heterotrimer of UreA (gamma), UreB (beta) and UreC (alpha) subunits. Three heterotrimers associate to form the active enzyme.

The protein localises to the cytoplasm. It carries out the reaction urea + 2 H2O + H(+) = hydrogencarbonate + 2 NH4(+). It functions in the pathway nitrogen metabolism; urea degradation; CO(2) and NH(3) from urea (urease route): step 1/1. This is Urease subunit beta from Aliivibrio fischeri (strain MJ11) (Vibrio fischeri).